The chain runs to 457 residues: UDP-N-acetylmuramoyl-tripeptide--D-alanyl-D-alanine ligase (457 aa).

Residue 109–115 coordinates ATP; sequence GSSGKTT.

The protein belongs to the MurCDEF family. MurF subfamily.

It is found in the cytoplasm. It catalyses the reaction D-alanyl-D-alanine + UDP-N-acetyl-alpha-D-muramoyl-L-alanyl-gamma-D-glutamyl-meso-2,6-diaminopimelate + ATP = UDP-N-acetyl-alpha-D-muramoyl-L-alanyl-gamma-D-glutamyl-meso-2,6-diaminopimeloyl-D-alanyl-D-alanine + ADP + phosphate + H(+). It participates in cell wall biogenesis; peptidoglycan biosynthesis. Functionally, involved in cell wall formation. Catalyzes the final step in the synthesis of UDP-N-acetylmuramoyl-pentapeptide, the precursor of murein. The protein is UDP-N-acetylmuramoyl-tripeptide--D-alanyl-D-alanine ligase of Haemophilus influenzae (strain ATCC 51907 / DSM 11121 / KW20 / Rd).